A 292-amino-acid chain; its full sequence is Elongation factor Ts (292 aa).

The tract at residues 80–83 is involved in Mg(2+) ion dislocation from EF-Tu; sequence TDFV.

It belongs to the EF-Ts family.

The protein localises to the cytoplasm. In terms of biological role, associates with the EF-Tu.GDP complex and induces the exchange of GDP to GTP. It remains bound to the aminoacyl-tRNA.EF-Tu.GTP complex up to the GTP hydrolysis stage on the ribosome. This is Elongation factor Ts from Limosilactobacillus fermentum (strain NBRC 3956 / LMG 18251) (Lactobacillus fermentum).